A 126-amino-acid polypeptide reads, in one-letter code: Cyclin-dependent kinase 2-associated protein 2 (126 aa).

The interval 1–48 is disordered; it reads MSYKPIAPAPSSTPGSSTPGPGTPVPTGSVPSPSGSVPGAGAPFRPLF. The span at 9–43 shows a compositional bias: low complexity; sequence APSSTPGSSTPGPGTPVPTGSVPSPSGSVPGAGAP. An interaction with CDK2 region spans residues 64–106; the sequence is PPGAQGSQSTYTDLLSVIEEMGKEIRPTYAGSKSAMERLKRGI.

The protein belongs to the CDK2AP family. As to quaternary structure, component of the nucleosome remodeling and deacetylase (NuRD) repressor complex, composed of core proteins MTA1, MTA2, MTA3, RBBP4, RBBP7, HDAC1, HDAC2, MBD2, MBD3, and peripherally associated proteins CDK2AP1, CDK2AP2, GATAD2A, GATAD2B, CHD3, CHD4 and CHD5. The exact stoichiometry of the NuRD complex is unknown, and some subunits such as MBD2 and MBD3, GATAD2A and GATAD2B, and CHD3, CHD4 and CHD5 define mutually exclusive NuRD complexes. Interacts with CDK2AP1. Interacts with CDK2. Interacts with MAPK1. Phosphorylated by MAPK1 and CDK2. In terms of tissue distribution, ubiquitous.

It localises to the cytoplasm. It is found in the nucleus. Functionally, acts as a component of the histone deacetylase NuRD complex which participates in the remodeling of chromatin. Inhibits cell cycle G1/S phase transition by repressing CDK2 expression and activation; represses CDK2 activation by inhibiting its interaction with cyclin E and A. Plays a role in regulating the self-renewal of embryonic stem cells (ESCs) and in maintaining cell survival during terminal differentiation of ESCs. Regulates microtubule organization of metaphase II oocytes. The chain is Cyclin-dependent kinase 2-associated protein 2 (CDK2AP2) from Homo sapiens (Human).